The primary structure comprises 171 residues: Neuronal vesicle trafficking-associated protein 2 (171 aa).

The segment at 1-21 (MVKLNSNPSEKGAKPPSVEDG) is disordered. The Cytoplasmic segment spans residues 1 to 71 (MVKLNSNPSE…FRVPKIAEFT (71 aa)). A helical; Signal-anchor for type II membrane protein membrane pass occupies residues 72-92 (VTILVSLALAFLACIVFLVVY). The Lumenal segment spans residues 93–171 (KAFTYDHSCP…EPKPPKTQGH (79 aa)).

It belongs to the NSG family.

The protein resides in the membrane. The protein localises to the golgi apparatus. It is found in the trans-Golgi network membrane. It localises to the cell projection. Its subcellular location is the dendrite. The protein resides in the endosome membrane. The protein localises to the early endosome membrane. It is found in the late endosome membrane. It localises to the lysosome lumen. Its subcellular location is the cytoplasmic vesicle membrane. The protein resides in the golgi stack membrane. The protein localises to the endosome. It is found in the multivesicular body membrane. The sequence is that of Neuronal vesicle trafficking-associated protein 2 from Bos taurus (Bovine).